Here is a 268-residue protein sequence, read N- to C-terminus: Deoxyuridine 5'-triphosphate nucleotidohydrolase (268 aa).

Substrate is bound by residues Arg-172–Ser-174 and Phe-263–Gly-264.

It belongs to the dUTPase family. The cofactor is Mg(2+).

The enzyme catalyses dUTP + H2O = dUMP + diphosphate + H(+). Its function is as follows. Involved in nucleotide metabolism: produces dUMP, the immediate precursor of thymidine nucleotides and decreases the intracellular concentration of dUTP to avoid uracil incorporation into viral DNA. This is Deoxyuridine 5'-triphosphate nucleotidohydrolase from Suid herpesvirus 1 (strain Kaplan) (SuHV-1).